The sequence spans 252 residues: Low-density lipoprotein receptor-related protein 5-like protein (252 aa).

5 LDL-receptor class B repeats span residues 3–45 (GHVY…NWVA), 46–88 (RSLY…HPEM), 89–132 (GLTY…DLQE), 133–175 (GKLY…LGDF), and 176–218 (IYWT…DKVV). A disordered region spans residues 223-247 (HADRNGGAATCASSRPTQPGLAAPS).

This Homo sapiens (Human) protein is Low-density lipoprotein receptor-related protein 5-like protein (LRP5L).